Reading from the N-terminus, the 196-residue chain is Serine recombinase PinR (196 aa).

One can recognise a Resolvase/invertase-type recombinase catalytic domain in the interval 3-143; the sequence is RIFAYCRIST…SGIVRARGAG (141 aa). Ser-11 acts as the O-(5'-phospho-DNA)-serine intermediate in catalysis.

Belongs to the site-specific recombinase resolvase family.

This chain is Serine recombinase PinR (pinR), found in Escherichia coli (strain K12).